Reading from the N-terminus, the 333-residue chain is Protein FanF (333 aa).

An N-terminal signal peptide occupies residues Met-1 to Ala-22.

In terms of processing, three disulfide bonds are present.

The protein localises to the fimbrium. Its function is as follows. Minor component of K99 fimbriae. Is not required for binding of K99 fimbriae to the ganglioside receptor. May play a role in initiation, elongation and flexibility of the fimbriae. The chain is Protein FanF (fanF) from Escherichia coli.